Here is a 229-residue protein sequence, read N- to C-terminus: Matrix protein (229 aa).

Positions 1–10 (MSSLKKILGL) are enriched in low complexity. The disordered stretch occupies residues 1–23 (MSSLKKILGLKGKGKKSKKLGIA). Positions 2–4 (SSL) match the dynamin binding motif. The PPXY motif motif lies at 24 to 27 (PPPY). The short motif at 37–40 (PSAP) is the PTAP/PSAP motif element.

The protein belongs to the vesiculoviruses matrix protein family. Homomultimer. Interacts with viral nucleocapsid; this interaction contributes to the virion assembly. Interacts with the viral envelope glycoprotein; this interaction contributes to the virion assembly. Interacts with host RAE1-NUP98 complex. Interacts with host NEDD4 and TSG101. Interacts with host dynamin. Interacts with host NDUFAF4; the interaction inhibits viral propagation and is independent of interferon activation. Interacts with host GTF2H5; the interaction may inhibit host transcription. Post-translationally, phosphorylated by host.

Its subcellular location is the virion. It localises to the host endomembrane system. The protein resides in the host nucleus membrane. It is found in the host nucleus. The protein localises to the host cytoplasm. Functionally, forms a double layer around the helical nucleocapsid, the inner matrix layer binding to the N helix and the outer matrix layer binding to the envelope glycoprotein. Plays a major role in assembly and budding of virion, by recruiting cellular partners of the ESCRT complexes that play a key role in releasing the budding particle from the host membrane. Condensates the ribonucleocapsid core during virus assembly. Inhibits the host mRNA nuclear export thereby inducing the shut off of cellular transcription and preventing the interferon signaling and the establishment of antiviral state in infected cells. This shutoff presumably inhibits interferon signaling and thus establishment of antiviral state in virus infected cells. Induces cell-rounding, cytoskeleton disorganization and apoptosis in infected cell. Inhibits host transcription, possibly through interaction with host DNA repair factor IIH/TFIIH GTF2H5 subunit. This Vesicular stomatitis Indiana virus (strain 98COE North America) (VSIV) protein is Matrix protein (M).